Reading from the N-terminus, the 874-residue chain is Alanine--tRNA ligase (874 aa).

4 residues coordinate Zn(2+): His-562, His-566, Cys-664, and His-668.

This sequence belongs to the class-II aminoacyl-tRNA synthetase family. Zn(2+) is required as a cofactor.

It is found in the cytoplasm. It catalyses the reaction tRNA(Ala) + L-alanine + ATP = L-alanyl-tRNA(Ala) + AMP + diphosphate. Catalyzes the attachment of alanine to tRNA(Ala) in a two-step reaction: alanine is first activated by ATP to form Ala-AMP and then transferred to the acceptor end of tRNA(Ala). Also edits incorrectly charged Ser-tRNA(Ala) and Gly-tRNA(Ala) via its editing domain. This Neisseria meningitidis serogroup B (strain ATCC BAA-335 / MC58) protein is Alanine--tRNA ligase.